Reading from the N-terminus, the 276-residue chain is HUWE1-associated protein modifying stress responses 2 (276 aa).

3 disordered regions span residues 146–182, 204–238, and 252–276; these read GKVP…TPVG, ISMR…PNSL, and VRKR…NRMV. Positions 149–165 are enriched in pro residues; that stretch reads PPTPQPPRTPRMSPRPP. 2 stretches are compositionally biased toward low complexity: residues 166-179 and 208-219; these read AAAS…ESGT and SGPPGSSSQDGG. The segment at 252–276 is nuclear localization signal; it reads VRKRTSAQFGDGSADSPLHKRNRMV.

It belongs to the HAPSTR1 family. Homooligomer. Heterooligomer with HAPSTR1; the interaction is direct and stabilizes HAPSTR1 independently of HUWE1. Interacts with HUWE1.

It localises to the nucleus. Together with HAPSTR1 plays a central regulatory role in the cellular response to molecular stressors, such as DNA damage, nutrient scarcity, and protein misfolding. Regulates these multiple stress response signaling pathways by stabilizing HAPSTR1, but also independently of HAPSTR1. This Mus musculus (Mouse) protein is HUWE1-associated protein modifying stress responses 2.